The primary structure comprises 5218 residues: HC-toxin synthetase (5218 aa).

Residues 223 to 620 (SARAHEQDAN…VGRSDTQIKL (398 aa)) are adenylation 1. Positions 769–843 (MNDDSLLLTA…TAASCIKSAQ (75 aa)) constitute a Carrier 1 domain. Position 803 is an O-(pantetheine 4'-phosphoryl)serine (Ser803). The segment at 858-1154 (IPVSPIQKLF…GWFTTISPVY (297 aa)) is condensation 1. The interval 1338 to 1806 (EGVYPGSPMQ…LPIVSEHDTA (469 aa)) is epimerization. An adenylation 2 region spans residues 1828 to 2233 (SRKVVEHPQR…IGRKDTQVKM (406 aa)). Positions 2379–2453 (ETTDTVEDRL…DMAKLFSHGQ (75 aa)) constitute a Carrier 2 domain. At Ser2414 the chain carries O-(pantetheine 4'-phosphoryl)serine. The tract at residues 2531 to 2929 (EDVFPCTPMQ…MEQFGHNLQT (399 aa)) is condensation 2. The tract at residues 2979–3386 (LEETAQSQPA…GRKDGQIKLR (408 aa)) is adenylation 3. The Carrier 3 domain occupies 3532–3608 (QVLTTNESVL…DMAGQISFVQ (77 aa)). Residue Ser3569 is modified to O-(pantetheine 4'-phosphoryl)serine. Residues 3649–4102 (EDVYPCTPLQ…PALSEAHLAE (454 aa)) form a condensation 3 region. The segment at 4134 to 4530 (RRAQQSPNSQ…NLYYVRRKDS (397 aa)) is adenylation 4. Positions 4666-4740 (THTQKLLRQL…AMSSLIDEHN (75 aa)) constitute a Carrier 4 domain. Ser4701 is modified (O-(pantetheine 4'-phosphoryl)serine). The interval 4785-5101 (TLPCTEYQQM…SAIREFIPQA (317 aa)) is condensation 4.

The protein belongs to the NRP synthetase family. Pantetheine 4'-phosphate serves as cofactor.

Its pathway is mycotoxin biosynthesis; HC-toxin biosynthesis. Functionally, non-ribosomal peptide synthetase, part of the diffuse TOX2 gene cluster that mediates the biosynthesis of the HC-toxin, cyclic tetrapeptide of structure cyclo(D-Pro-L-Ala-D-Ala-L-Aeo), where Aeo stands for 2-amino-9,10-epoxi-8-oxodecanoic acid. HC-toxin is a determinant of specificity and virulence in the interaction between the producing fungus and its host, maize. HTS1, contains four modules, one for each amino acid in HC-toxin, with the order of activation being most likely Pro, Ala, Ala, and Aeo. In addition, HTS1 has one epimerase domain between modules 1 and 2, which is responsible for epimerizing L-Pro to D-Pro. The absence of an epimerizing domain after module 3, for producing D-Ala, can be explained by the presence in the cluster of TOXG, an Ala racemase, which produces D-Ala for incorporation by HTS1 into HC-toxin. The chain is HC-toxin synthetase from Cochliobolus carbonum (Maize leaf spot fungus).